We begin with the raw amino-acid sequence, 124 residues long: Holo-[acyl-carrier-protein] synthase (124 aa).

Asp8 and Glu58 together coordinate Mg(2+).

Belongs to the P-Pant transferase superfamily. AcpS family. Mg(2+) is required as a cofactor.

The protein localises to the cytoplasm. The catalysed reaction is apo-[ACP] + CoA = holo-[ACP] + adenosine 3',5'-bisphosphate + H(+). Functionally, transfers the 4'-phosphopantetheine moiety from coenzyme A to a Ser of acyl-carrier-protein. The protein is Holo-[acyl-carrier-protein] synthase of Lacticaseibacillus casei (strain BL23) (Lactobacillus casei).